The chain runs to 146 residues: Hemoglobin subunit beta (146 aa).

Positions 2-146 (QWSAEEKQLI…VAHALARKYH (145 aa)) constitute a Globin domain. Positions 63 and 92 each coordinate heme b.

Belongs to the globin family. In terms of assembly, heterotetramer of two alpha chains and two beta chains. As to expression, red blood cells.

Its function is as follows. Involved in oxygen transport from the lung to the various peripheral tissues. This Struthio camelus (Common ostrich) protein is Hemoglobin subunit beta (HBB).